We begin with the raw amino-acid sequence, 390 residues long: MVQLTIDNARGVTLCRVSLPANATVQQLLLQLTVAKPELRQAQAIRNDVRHVTHRLTPASTTTTTTTSVVSSNAQTLLQAGLVGQGATAETLVVLMAADAPAAASSAAAAAPSPTKAVAAQILDLFGCASASPSAGVRSQASVVPSTMDERQLELQRRIYAQIQQQQIDENLANALEYTPEAFAKVTMLYVPCTINQVLVKAFVDSGAQNSIMNKRTAERCGLMRLVDVRMRDVAVGVGRQEICGRIHMTPVNLAGMYIPFAFYVIEDQAMDLIIGLDQLKRHQMMIDLKHNCLTIDNINVPFLPENDLPALAALGDDENAMHAPRHQDPATTATTASNPAAPVLSEGERQARIEGFMTVSGITDPTQAAELLEAADWNPNVAAALLFDT.

The active site involves D205. Residues M322–V344 form a disordered region. Positions P330 to P343 are enriched in low complexity.

The protein belongs to the DDI1 family.

It localises to the cytoplasm. With respect to regulation, inhibited by pepstatin, diazoacetyl-DL-norleucine methyl ester (DAN) and nelfinavir. Inhibited by the proteinase inhibitors lopinavir and ritonavir. Functionally, aspartic protease. This is Protein DDI1 homolog from Leishmania major.